Consider the following 649-residue polypeptide: DNA mismatch repair protein MutL (649 aa).

This sequence belongs to the DNA mismatch repair MutL/HexB family.

Functionally, this protein is involved in the repair of mismatches in DNA. It is required for dam-dependent methyl-directed DNA mismatch repair. May act as a 'molecular matchmaker', a protein that promotes the formation of a stable complex between two or more DNA-binding proteins in an ATP-dependent manner without itself being part of a final effector complex. This chain is DNA mismatch repair protein MutL, found in Streptococcus pneumoniae serotype 2 (strain D39 / NCTC 7466).